The chain runs to 67 residues: Conotoxin Cl14.2b (67 aa).

Residues 1–20 (MNVTVMFLVLLLLTMPLTDG) form the signal peptide. The propeptide occupies 21-48 (FNIRATNGGELFGPVQRDAGNVLDHGFQ).

This sequence belongs to the conotoxin L superfamily. In terms of processing, contains 2 disulfide bonds. Expressed by the venom duct.

The protein resides in the secreted. Its function is as follows. Increases calcium current amplitude through Cav1.2/Cav1.3 channels in rat pancreatic beta-cells, which is a prerequisite for eliciting insulin secretion. Stimulates insulin secretion in NIT-1 insulinoma cell lines. In vivo, significantly decreases mice blood glucose levels as of 45 minutes after treatment, similarly to insulin treatment. Has a potential therapeutic use in endocrinal pathologies such as early stages of type 2 diabetes where the pancreas's capability to produce insulin is still effective. This chain is Conotoxin Cl14.2b, found in Californiconus californicus (California cone).